The chain runs to 359 residues: MWRPSISNCVWSTLLLAIFVQQTLAQRTPTISYITQEQIKDIGGTVEFDCSVQYAKEYNVLFLKTDSDPVFLSTGSTLVIKDSRFSLRYDPNSSTYKLQIKDIQETDAGTYTCQVVISTVHKVSAEVKLSVRRPPVISDNSTQSVVASEGSEVQMECYASGYPTPTITWRRENNAILPTDSATYVGNTLRIKSVKKEDRGTYYCVADNGVSKGDRRNINVEVEFAPVITVPRPRLGQALQYDMDLECHIEAYPPPAIVWTKDDIQLANNQHYSISHFATADEYTDSTLRVITVEKRQYGDYVCKATNRFGEAEARVNLFETIIPVCPPACGQAYIAGAEDVSATSFALVGILAALLFAR.

A signal peptide spans 1 to 25 (MWRPSISNCVWSTLLLAIFVQQTLA). One can recognise an Ig-like V-type domain in the interval 29–130 (PTISYITQEQ…HKVSAEVKLS (102 aa)). Cys50 and Cys113 are oxidised to a cystine. Residues Asn92 and Asn140 are each glycosylated (N-linked (GlcNAc...) asparagine). 2 consecutive Ig-like C2-type domains span residues 135–221 (PVIS…INVE) and 226–317 (PVIT…ARVN). Intrachain disulfides connect Cys157/Cys204 and Cys247/Cys303. Residue Ala336 is the site of GPI-anchor amidated alanine attachment. Residues 337-359 (GAEDVSATSFALVGILAALLFAR) constitute a propeptide, removed in mature form.

In terms of tissue distribution, expressed on differentiating neuronal cells from the onset of neurogenesis in both the central and peripheral nervous systems. First detected in the cellularized blastoderm, apart from in the ventral side. Expression persists uniformly in the early ectoderm until the end of gastrulation. From stage 10, expressed in an alternating strong/weak pattern in each segment until stage 15 when it disappears. From stage 11, expressed in subsets of neurons and later subsets of glial cells. From early stage 13, strongly expressed in trachea, hindgut, foregut and the nervous system.

The protein localises to the cell membrane. Required for normal tracheal development and maintenance of the trans-epithelial diffusion barrier. Functions as a homophilic cell-adhesion molecule. May play a role in early neuronal differentiation and axon outgrowth. The protein is Lachesin (Lac) of Drosophila melanogaster (Fruit fly).